A 626-amino-acid chain; its full sequence is Chaperone protein HtpG (626 aa).

The segment at 1–341 (METKQFKAES…SEDLSLNISR (341 aa)) is a; substrate-binding. The b stretch occupies residues 342 to 552 (EILQHDRQLK…EGELSIEMEK (211 aa)). A c region spans residues 553–626 (VLNAMPNNQN…FTNNICKIMK (74 aa)).

The protein belongs to the heat shock protein 90 family. As to quaternary structure, homodimer.

Its subcellular location is the cytoplasm. Its function is as follows. Molecular chaperone. Has ATPase activity. The sequence is that of Chaperone protein HtpG from Clostridium botulinum (strain 657 / Type Ba4).